The sequence spans 497 residues: 4,4'-diaponeurosporene oxygenase (497 aa).

7–19 (VIGGGLGGISAAI) contributes to the FAD binding site.

Belongs to the carotenoid/retinoid oxidoreductase family. CrtP subfamily. FAD serves as cofactor.

It catalyses the reaction all-trans-4,4'-diaponeurosporene + 2 AH2 + 2 O2 = 4,4'-diaponeurosporenal + 2 A + 3 H2O. It participates in carotenoid biosynthesis; staphyloxanthin biosynthesis; staphyloxanthin from farnesyl diphosphate: step 3/5. Involved in the biosynthesis of the yellow-orange carotenoid staphyloxanthin, which plays a role in the virulence via its protective function against oxidative stress. Catalyzes the oxidation of the terminal methyl side group of 4,4'-diaponeurosporene to form 4,4'-diaponeurosporen-4-al. The C40 carotenoid lycopene is a poor substrate. This chain is 4,4'-diaponeurosporene oxygenase, found in Staphylococcus aureus (strain Mu50 / ATCC 700699).